A 504-amino-acid polypeptide reads, in one-letter code: ATP synthase subunit alpha (504 aa).

169 to 176 serves as a coordination point for ATP; sequence GDRKTGKT.

The protein belongs to the ATPase alpha/beta chains family. F-type ATPases have 2 components, CF(1) - the catalytic core - and CF(0) - the membrane proton channel. CF(1) has five subunits: alpha(3), beta(3), gamma(1), delta(1), epsilon(1). CF(0) has three main subunits: a(1), b(2) and c(9-12). The alpha and beta chains form an alternating ring which encloses part of the gamma chain. CF(1) is attached to CF(0) by a central stalk formed by the gamma and epsilon chains, while a peripheral stalk is formed by the delta and b chains.

It is found in the cell membrane. It catalyses the reaction ATP + H2O + 4 H(+)(in) = ADP + phosphate + 5 H(+)(out). Functionally, produces ATP from ADP in the presence of a proton gradient across the membrane. The alpha chain is a regulatory subunit. In Leuconostoc citreum (strain KM20), this protein is ATP synthase subunit alpha.